The following is a 484-amino-acid chain: TPR repeat-containing protein YvcD (484 aa).

TPR repeat units follow at residues 21–54, 55–88, and 187–220; these read GQYF…EPED, SEML…LEAE, and WSAY…NEGN.

The sequence is that of TPR repeat-containing protein YvcD (yvcD) from Bacillus subtilis (strain 168).